A 248-amino-acid polypeptide reads, in one-letter code: Granulin (248 aa).

The protein belongs to the polyhedrin family.

Functionally, component of the virus occlusion bodies, which are large proteinaceous structures, that protect the virus from the outside environment for extended periods until they are ingested by insect larvae. This chain is Granulin, found in Cydia pomonella (Codling moth).